A 536-amino-acid polypeptide reads, in one-letter code: MFS-type efflux pump MFS1 (536 aa).

Transmembrane regions (helical) follow at residues 30 to 50 (VTGL…LLVA), 80 to 100 (YLLT…FFPV), and 102 to 122 (WVFL…GAAP). N-linked (GlcNAc...) asparagine glycosylation occurs at asparagine 123. A run of 3 helical transmembrane segments spans residues 133-153 (VAGI…AYSI), 163-183 (GAIG…GGAF), and 191-211 (WCFY…LIFL). An N-linked (GlcNAc...) asparagine glycan is attached at asparagine 221. 8 helical membrane-spanning segments follow: residues 234–254 (IGTA…QWGG), 264–284 (IIAL…FQIR), 306–326 (FFLF…PIWF), 342–362 (IPMV…VTAI), 366–386 (APLY…LTTF), 400–420 (IIFG…AQAV), 426–446 (VAVG…LFVS), and 503–523 (TWYV…GMEW).

The protein belongs to the major facilitator superfamily. TCR/Tet family.

It localises to the cell membrane. In terms of biological role, MFS-type efflux pump involved in the modulation susceptibility to azoles, including fluconazole, itraconazole, miconazole and voriconazole. Also confers increased resistance chloramphenicol and thiamphenicol, suggesting that it acts as a pleiotropic drug transporter with a broad substrate spectrum. Finally, increases the tolerance to cycloheximide when expressed in S.cerevisiae, but not in dermatophyte species. The protein is MFS-type efflux pump MFS1 of Arthroderma benhamiae (strain ATCC MYA-4681 / CBS 112371) (Trichophyton mentagrophytes).